The chain runs to 253 residues: Matrix protein (253 aa).

A disordered region spans residues 1 to 26 (MLSRIKQGIKTKRSSSSSSSRSKTGD). The PTAP/PSAP motif motif lies at 55–58 (PTAP).

As to quaternary structure, homomultimer. Interacts with viral nucleocapsid. Interacts with host TSG101.

The protein localises to the virion membrane. Its subcellular location is the host endomembrane system. The protein resides in the host nucleus membrane. Its function is as follows. Plays a major role in assembly and budding of virion, by recruiting cellular partners of the ESCRT complexes that play a key role in releasing the budding particle from the host membrane. Condensates the ribonucleocapsid core during virus assembly. The polypeptide is Matrix protein (M) (Bos taurus (Bovine)).